Here is a 612-residue protein sequence, read N- to C-terminus: Elongation factor 4 (612 aa).

A tr-type G domain is found at 11 to 193; the sequence is KHIRNFAIVA…KVVKDIPAPS (183 aa). GTP contacts are provided by residues 23–28 and 140–143; these read DHGKST and NKID.

This sequence belongs to the TRAFAC class translation factor GTPase superfamily. Classic translation factor GTPase family. LepA subfamily.

It is found in the cell membrane. It catalyses the reaction GTP + H2O = GDP + phosphate + H(+). Functionally, required for accurate and efficient protein synthesis under certain stress conditions. May act as a fidelity factor of the translation reaction, by catalyzing a one-codon backward translocation of tRNAs on improperly translocated ribosomes. Back-translocation proceeds from a post-translocation (POST) complex to a pre-translocation (PRE) complex, thus giving elongation factor G a second chance to translocate the tRNAs correctly. Binds to ribosomes in a GTP-dependent manner. This Lactobacillus helveticus (strain DPC 4571) protein is Elongation factor 4.